Reading from the N-terminus, the 333-residue chain is MKLGRATLALLLLVPCVVRAVEPISLGLALAGVLTGYISYPRLYCLFAECCGQKRSLSREALQKDLDNKLFGQHLAKRVILNAVSGFLSNPKPKKPLTLSLHGWTGTGKNFASKIIAENIYEGGLNSDYVHLFVATLHFPHASNITLYKDQLQMWIRGNVSACARSIFIFDEMDKMHAGLIDAIKPFLDYYDVVDEVSYQKAIFIFLSNAGAERITDVALDFWRSGKQREEIKLRDMEHALAVSVFNNKNSGFWHSSLIDRNLIDYFVPFLPLEYKHLKMCIRVEMQSRGYEEDEDIINKVAEEMTFFPKEEKVFSDKGCKTVFTKLDYYLDD.

Residues 1–20 (MKLGRATLALLLLVPCVVRA) form the signal peptide. Positions 92-252 (KPKKPLTLSL…VSVFNNKNSG (161 aa)) are interaction with SNAPIN. Residues Asn-144 and Asn-159 are each glycosylated (N-linked (GlcNAc...) asparagine). Residues 252–333 (GFWHSSLIDR…FTKLDYYLDD (82 aa)) are interaction with KLC1. The interval 313 to 333 (KVFSDKGCKTVFTKLDYYLDD) is interaction with SYNE3.

Belongs to the ClpA/ClpB family. Torsin subfamily. In terms of assembly, homohexamer. Interacts with TOR1B; the interaction may be specific of neural tissues. Interacts (ATP-bound) with TOR1AIP1 and TOR1AIP2; the interactions induce ATPase activity. Interacts with KLHL14; preferentially when ATP-free. Interacts with KLC1 (via TPR repeats); the interaction associates TOR1A with the kinesin oligomeric complex. Interacts with COPS4; the interaction associates TOR1A with the CSN complex. Interacts with SNAPIN; the interaction is direct and associates SNAPIN with the CSN complex. Interacts with STON2. Interacts (ATP-bound) with SYNE3 (via KASH domain); the interaction is required for SYNE3 nuclear envelope localization. Interacts with VIM; the interaction associates TOR1A with the cytoskeleton. Interacts with PLEC. Interacts (ATP-bound) with SLC6A3; regulates SLC6A3 transport to the plasma membrane. Post-translationally, N-glycosylated. As to expression, expressed in brain (at protein level).

The protein localises to the endoplasmic reticulum lumen. The protein resides in the nucleus inner membrane. It localises to the cell projection. Its subcellular location is the growth cone. It is found in the cytoplasmic vesicle membrane. The protein localises to the cytoplasmic vesicle. The protein resides in the secretory vesicle. It localises to the synaptic vesicle. It catalyses the reaction ATP + H2O = ADP + phosphate + H(+). In terms of biological role, protein with chaperone functions important for the control of protein folding, processing, stability and localization as well as for the reduction of misfolded protein aggregates. Involved in the regulation of synaptic vesicle recycling, controls STON2 protein stability in collaboration with the COP9 signalosome complex (CSN). In the nucleus, may link the cytoskeleton with the nuclear envelope, this mechanism seems to be crucial for the control of nuclear polarity, cell movement and, specifically in neurons, nuclear envelope integrity. Participates in the cellular trafficking and may regulate the subcellular location of multipass membrane proteins such as the dopamine transporter SLC6A3, leading to the modulation of dopamine neurotransmission. In the endoplasmic reticulum, plays a role in the quality control of protein folding by increasing clearance of misfolded proteins such as SGCE variants or holding them in an intermediate state for proper refolding. May have a redundant function with TOR1B in non-neural tissues. In Rattus norvegicus (Rat), this protein is Torsin-1A (Tor1a).